Consider the following 209-residue polypeptide: 8-oxoguanine DNA glycosylase/AP lyase (209 aa).

Active-site residues include lysine 131 and aspartate 149.

The protein belongs to the type-2 OGG1 family.

The catalysed reaction is 2'-deoxyribonucleotide-(2'-deoxyribose 5'-phosphate)-2'-deoxyribonucleotide-DNA = a 3'-end 2'-deoxyribonucleotide-(2,3-dehydro-2,3-deoxyribose 5'-phosphate)-DNA + a 5'-end 5'-phospho-2'-deoxyribonucleoside-DNA + H(+). Functionally, catalyzes the excision of an oxidatively damaged form of guanine (7,8-dihydro-8-oxoguanine = 8-oxoG) from DNA. Also cleaves the DNA backbone at apurinic/apyrimidinic sites (AP sites). The chain is 8-oxoguanine DNA glycosylase/AP lyase from Korarchaeum cryptofilum (strain OPF8).